A 130-amino-acid polypeptide reads, in one-letter code: Small ribosomal subunit protein uS11 (130 aa).

It belongs to the universal ribosomal protein uS11 family. In terms of assembly, part of the 30S ribosomal subunit. Interacts with proteins S7 and S18. Binds to IF-3.

Functionally, located on the platform of the 30S subunit, it bridges several disparate RNA helices of the 16S rRNA. Forms part of the Shine-Dalgarno cleft in the 70S ribosome. This is Small ribosomal subunit protein uS11 from Nitratiruptor sp. (strain SB155-2).